The chain runs to 121 residues: Large ribosomal subunit protein uL14 (121 aa).

It belongs to the universal ribosomal protein uL14 family. As to quaternary structure, part of the 50S ribosomal subunit. Forms a cluster with proteins L3 and L19. In the 70S ribosome, L14 and L19 interact and together make contacts with the 16S rRNA in bridges B5 and B8.

Its function is as follows. Binds to 23S rRNA. Forms part of two intersubunit bridges in the 70S ribosome. This chain is Large ribosomal subunit protein uL14, found in Opitutus terrae (strain DSM 11246 / JCM 15787 / PB90-1).